The following is a 165-amino-acid chain: SsrA-binding protein (165 aa).

The tract at residues lysine 141–tyrosine 165 is disordered. Positions lysine 145–lysine 159 are enriched in basic and acidic residues.

It belongs to the SmpB family.

The protein resides in the cytoplasm. Its function is as follows. Required for rescue of stalled ribosomes mediated by trans-translation. Binds to transfer-messenger RNA (tmRNA), required for stable association of tmRNA with ribosomes. tmRNA and SmpB together mimic tRNA shape, replacing the anticodon stem-loop with SmpB. tmRNA is encoded by the ssrA gene; the 2 termini fold to resemble tRNA(Ala) and it encodes a 'tag peptide', a short internal open reading frame. During trans-translation Ala-aminoacylated tmRNA acts like a tRNA, entering the A-site of stalled ribosomes, displacing the stalled mRNA. The ribosome then switches to translate the ORF on the tmRNA; the nascent peptide is terminated with the 'tag peptide' encoded by the tmRNA and targeted for degradation. The ribosome is freed to recommence translation, which seems to be the essential function of trans-translation. The polypeptide is SsrA-binding protein (Prochlorococcus marinus (strain MIT 9313)).